A 148-amino-acid chain; its full sequence is Macrodomain Ter protein (148 aa).

It belongs to the MatP family. In terms of assembly, homodimer.

The protein localises to the cytoplasm. Functionally, required for spatial organization of the terminus region of the chromosome (Ter macrodomain) during the cell cycle. Prevents early segregation of duplicated Ter macrodomains during cell division. Binds specifically to matS, which is a 13 bp signature motif repeated within the Ter macrodomain. This Haemophilus influenzae (strain PittGG) protein is Macrodomain Ter protein.